A 97-amino-acid chain; its full sequence is Insertion element IS2 uncharacterized 11.1 kDa protein (97 aa).

The chain is Insertion element IS2 uncharacterized 11.1 kDa protein from Escherichia coli.